The primary structure comprises 207 residues: BON1-associated protein 2 (207 aa).

A C2 domain is found at 1–112 (MSYSTFKRSL…GFAPQGHLNF (112 aa)).

As to quaternary structure, interacts with BON1, BON2 and BON3. As to expression, expressed in roots, leaves, stems and flowers.

The protein localises to the membrane. Its function is as follows. Negative regulator of cell death and defense responses. Exhibits calcium-dependent phospholipid binding properties. The sequence is that of BON1-associated protein 2 (BAP2) from Arabidopsis thaliana (Mouse-ear cress).